The sequence spans 442 residues: 3-isopropylmalate dehydratase large subunit (442 aa).

Positions 347, 407, and 410 each coordinate [4Fe-4S] cluster.

The protein belongs to the aconitase/IPM isomerase family. LeuC type 1 subfamily. Heterodimer of LeuC and LeuD. [4Fe-4S] cluster serves as cofactor.

It carries out the reaction (2R,3S)-3-isopropylmalate = (2S)-2-isopropylmalate. It functions in the pathway amino-acid biosynthesis; L-leucine biosynthesis; L-leucine from 3-methyl-2-oxobutanoate: step 2/4. Functionally, catalyzes the isomerization between 2-isopropylmalate and 3-isopropylmalate, via the formation of 2-isopropylmaleate. The sequence is that of 3-isopropylmalate dehydratase large subunit from Buchnera aphidicola subsp. Uroleucon helianthicola.